The following is a 269-amino-acid chain: Dermonecrotic toxin SpeSicTox-betaIB3 (269 aa).

Residue His-5 is part of the active site. Residues Glu-25 and Asp-27 each contribute to the Mg(2+) site. Residue His-41 is the Nucleophile of the active site. Cystine bridges form between Cys-45–Cys-51 and Cys-47–Cys-191. Mg(2+) is bound at residue Asp-85.

This sequence belongs to the arthropod phospholipase D family. Class II subfamily. Mg(2+) is required as a cofactor. Expressed by the venom gland.

Its subcellular location is the secreted. The enzyme catalyses an N-(acyl)-sphingosylphosphocholine = an N-(acyl)-sphingosyl-1,3-cyclic phosphate + choline. It catalyses the reaction an N-(acyl)-sphingosylphosphoethanolamine = an N-(acyl)-sphingosyl-1,3-cyclic phosphate + ethanolamine. It carries out the reaction a 1-acyl-sn-glycero-3-phosphocholine = a 1-acyl-sn-glycero-2,3-cyclic phosphate + choline. The catalysed reaction is a 1-acyl-sn-glycero-3-phosphoethanolamine = a 1-acyl-sn-glycero-2,3-cyclic phosphate + ethanolamine. Dermonecrotic toxins cleave the phosphodiester linkage between the phosphate and headgroup of certain phospholipids (sphingolipid and lysolipid substrates), forming an alcohol (often choline) and a cyclic phosphate. This toxin acts on sphingomyelin (SM). It may also act on ceramide phosphoethanolamine (CPE), lysophosphatidylcholine (LPC) and lysophosphatidylethanolamine (LPE), but not on lysophosphatidylserine (LPS), and lysophosphatidylglycerol (LPG). It acts by transphosphatidylation, releasing exclusively cyclic phosphate products as second products. Induces dermonecrosis, hemolysis, increased vascular permeability, edema, inflammatory response, and platelet aggregation. The polypeptide is Dermonecrotic toxin SpeSicTox-betaIB3 (Sicarius peruensis (Six-eyed sand spider)).